The chain runs to 126 residues: Fatty acid-binding protein, liver (126 aa).

Alanine 2 is modified (N-acetylalanine).

The protein belongs to the calycin superfamily. Fatty-acid binding protein (FABP) family.

Its subcellular location is the cytoplasm. In terms of biological role, binds free fatty acids and their coenzyme A derivatives, bilirubin, and some other small molecules in the cytoplasm. May be involved in intracellular lipid transport. The sequence is that of Fatty acid-binding protein, liver (fabp1) from Schroederichthys bivius (Narrowmouthed catshark).